Reading from the N-terminus, the 1090-residue chain is Nitrogen assimilation transcription factor nit-4 (1090 aa).

Positions Met1–Ala14 are enriched in polar residues. Residues Met1–Asn43 are disordered. A DNA-binding region (zn(2)-C6 fungal-type) is located at residues Cys53–Cys81. Disordered stretches follow at residues Arg145–Val176, Phe666–Pro689, His773–Gln798, Gly825–Pro875, Gln936–Gln999, and His1033–Gly1053. Residues Gly167 to Val176 are compositionally biased toward basic and acidic residues. Residues Phe666–Thr677 are compositionally biased toward polar residues. Residues Gln849 to Gln859 are compositionally biased toward low complexity. Gly residues-rich tracts occupy residues Leu940–Gly965 and Asn976–Thr988. A compositionally biased stretch (low complexity) spans Gln990–Gln999.

It is found in the nucleus. Pathway-specific regulatory gene of nitrate assimilation; it activates the transcription of the genes for nitrate and nitrite reductases. The chain is Nitrogen assimilation transcription factor nit-4 (nit-4) from Neurospora crassa (strain ATCC 24698 / 74-OR23-1A / CBS 708.71 / DSM 1257 / FGSC 987).